The primary structure comprises 608 residues: MTTSALRRQVKNIVHNYSEAEIKVREATSNDPWGPPSSLMSEIADLTFNTVAFAEVMGMVWRRLNDSGKNWRHVYKALTLLDYLLKTGSERVAHQCRENLYTIQTLKDFQYIDRDGKDQGVNVREKVKQVMALLKDEERLRQERTHALKTKERMALEGMGIGSGQLGFSRRSRGSPSSYTSASSSPRYASDLEQARPQTSGEEELQLQLALAMSREEAEKGGRSWKGDDFPVANGAEPAGQRRRDREPEREERKEEEKLKTSQSSILDLADVFAPAPALPSTHCSADPWDIPGLRPNTEPSGSSWGPSADPWSPVPSGNALSRSQPWDLLPTLSSSEPWGRTPVLPSGPPITDPWAPSSPTPKLPSTGVDPWGASVETSNTSALGGASPFDPFAKPLESTEPMESRDSAQALPKGKSPSPVELDPFGDSSPSCKQNGVKETEALDLGVLGEALTQQPGKEARPCRTPESFLGPSASSLVNLDSLVKAPLAARTRNPFLTGLSAPSPTNPFGAGEQGRPTLNQMRTGSPALGLPPGGPVGVPLGSMTYSASLPLPLSSVPVGATLPASVSVFPQAGAFAPPPASLPQPLLPTSDPVGPLPPQAGTNPFL.

Residues arginine 8, lysine 11, arginine 25, asparagine 30, arginine 63, and histidine 73 each contribute to the a 1,2-diacyl-sn-glycero-3-phospho-(1D-myo-inositol-4,5-bisphosphate) site. One can recognise an ENTH domain in the interval 12-144 (NIVHNYSEAE…KDEERLRQER (133 aa)). Disordered stretches follow at residues 150-266 (TKER…QSSI) and 281-475 (STHC…GPSA). The span at 174 to 189 (GSPSSYTSASSSPRYA) shows a compositional bias: low complexity. A phosphoserine mark is found at serine 184 and serine 185. The UIM domain occupies 202 to 221 (EEELQLQLALAMSREEAEKG). Composition is skewed to basic and acidic residues over residues 214–229 (SREEAEKGGRSWKGDD) and 240–260 (GQRRRDREPEREERKEEEKLK). A run of 7 repeats spans residues 287-289 (DPW), 310-312 (DPW), 337-339 (EPW), 353-355 (DPW), 370-372 (DPW), 495-497 (NPF), and 508-510 (NPF). Residues 287-372 (DPWDIPGLRP…KLPSTGVDPW (86 aa)) form a 5 X 3 AA repeats of [DE]-P-W region. Positions 346–363 (PSGPPITDPWAPSSPTPK) are enriched in pro residues. Residues 495 to 607 (NPFLTGLSAP…LPPQAGTNPF (113 aa)) are 3 X 3 AA repeats of N-P-F. Disordered stretches follow at residues 498–530 (LTGLSAPSPTNPFGAGEQGRPTLNQMRTGSPAL) and 575–608 (GAFAPPPASLPQPLLPTSDPVGPLPPQAGTNPFL). Residues 578–588 (APPPASLPQPL) are compositionally biased toward pro residues. Residues 605-607 (NPF) form repeat 3.

It belongs to the epsin family.

Its subcellular location is the cytoplasm. The protein localises to the cell cortex. The protein resides in the perinuclear region. It localises to the cytoplasmic vesicle. It is found in the clathrin-coated vesicle. Its subcellular location is the nucleus. The protein is Epsin-3 (Epn3) of Rattus norvegicus (Rat).